A 457-amino-acid polypeptide reads, in one-letter code: Transcription factor PCF7 (457 aa).

Positions 58-84 (STLHYLLQEKERAQQAHEQLQIYQQQQ) form a coiled coil. The tract at residues 95–119 (RQPASRGPGGGGGGGDGGGSSGEST) is disordered. Over residues 101 to 115 (GPGGGGGGGDGGGSS) the composition is skewed to gly residues. Residues 140 to 198 (RKDRHSKVCTARGLRDRRVRLAAHTAIRFYDVQDRLGYDRPSKAVDWLMRNAKAAIDEL) form the TCP domain. Disordered regions lie at residues 199-231 (PDRA…GFGN) and 263-299 (KSLF…SNQQ). Composition is skewed to low complexity over residues 210–225 (AAST…ATST) and 268–278 (SSSTASGAASA).

Forms homodimers and heterodimers.

The protein localises to the nucleus. Transcription activator. Binds the promoter core sequence 5'-GGNCC-3'. The sequence is that of Transcription factor PCF7 (PCF7) from Oryza sativa subsp. japonica (Rice).